Reading from the N-terminus, the 108-residue chain is Protein ORFa in retron Ec67 (108 aa).

This is Protein ORFa in retron Ec67 from Escherichia coli.